Here is a 367-residue protein sequence, read N- to C-terminus: Putative F-box/kelch-repeat protein At4g39600 (367 aa).

Residues 11 to 57 (ATSNPSLPEDLVVSCLARVSRLYYPTLSLVSKSFRSLIASPDLYKTR) enclose the F-box domain. Kelch repeat units lie at residues 127 to 171 (HLYA…LDGK) and 172 to 216 (MYLA…EGKI).

The chain is Putative F-box/kelch-repeat protein At4g39600 from Arabidopsis thaliana (Mouse-ear cress).